The following is a 122-amino-acid chain: Serum amyloid A-1 protein (122 aa).

The first 19 residues, 1 to 19 (MKLLSGLLLCSLVLGVSSQ), serve as a signal peptide directing secretion. Residues 20–45 (RWFSFIGEATQGAWDMWRAYSDMREA) form an important for amyloid formation region. A disordered region spans residues 87–122 (MGHGAEDSMADQAANEWGRSGKDPNHFRPKGLPDKY). Positions 105–122 (RSGKDPNHFRPKGLPDKY) are enriched in basic and acidic residues.

The protein belongs to the SAA family. Homohexamer; dimer of trimers. Can form amyloid fibrils after partial proteolysis; the native, undenatured protein does not form amyloid fibrils (in vitro). Apolipoprotein of the HDL complex. Binds to heparin. As to expression, detected in liver.

It localises to the secreted. Its function is as follows. Major acute phase protein. This Oryctolagus cuniculus (Rabbit) protein is Serum amyloid A-1 protein (SAA1).